The following is a 356-amino-acid chain: uncharacterized protein (356 aa).

6 helical membrane-spanning segments follow: residues 2–22, 35–55, 74–94, 99–119, 124–144, and 154–174; these read FEAF…FHRL, AYVT…PIPY, FTNM…EIVV, IMYG…GPFL, VLSL…VALV, and IILI…FVDI. In terms of domain architecture, GGDEF spans 218–353; the sequence is QSIALLLIDI…GRNKVMFNPI (136 aa).

Its subcellular location is the cell membrane. This is an uncharacterized protein from Staphylococcus aureus (strain bovine RF122 / ET3-1).